Reading from the N-terminus, the 334-residue chain is Heme A synthase (334 aa).

The next 5 helical transmembrane spans lie at 6-26 (ITRW…IGGI), 93-113 (GRIT…QGVI), 119-139 (LPYI…WYMV), 154-174 (LAFH…QLIK), and 189-209 (LIFS…GALV). Heme is bound at residue H253. 3 consecutive transmembrane segments (helical) span residues 255 to 275 (LGGF…FKVK), 282 to 302 (IAYF…ITIV), and 305 to 325 (VPII…SIII). H313 lines the heme pocket.

The protein belongs to the COX15/CtaA family. Type 2 subfamily. In terms of assembly, interacts with CtaB. It depends on heme b as a cofactor.

The protein localises to the cell membrane. It carries out the reaction Fe(II)-heme o + 2 A + H2O = Fe(II)-heme a + 2 AH2. Its pathway is porphyrin-containing compound metabolism; heme A biosynthesis; heme A from heme O: step 1/1. Its function is as follows. Catalyzes the conversion of heme O to heme A by two successive hydroxylations of the methyl group at C8. The first hydroxylation forms heme I, the second hydroxylation results in an unstable dihydroxymethyl group, which spontaneously dehydrates, resulting in the formyl group of heme A. The sequence is that of Heme A synthase from Rickettsia prowazekii (strain Madrid E).